We begin with the raw amino-acid sequence, 1034 residues long: Platelet endothelial aggregation receptor 1 (1034 aa).

An N-terminal signal peptide occupies residues 1-18; that stretch reads MPLCPLLLLALGLRLTGT. The Extracellular portion of the chain corresponds to 19–754; it reads LNSNDPNVCT…PTSPVTHNSL (736 aa). The EMI domain maps to 23–101; that stretch reads DPNVCTFWES…YYESRGACVP (79 aa). Disulfide bonds link cysteine 27/cysteine 89, cysteine 53/cysteine 63, and cysteine 88/cysteine 99. Asparagine 150 carries an N-linked (GlcNAc...) asparagine glycan. EGF-like domains follow at residues 181 to 215, 223 to 258, 266 to 301, 309 to 344, and 398 to 433; these read YGPA…PSCN, DGFF…VICS, HGPN…DRCQ, FGQD…DRCT, and HGPG…PHCA. Intrachain disulfides connect cysteine 185–cysteine 196, cysteine 189–cysteine 203, cysteine 205–cysteine 214, cysteine 233–cysteine 246, and cysteine 248–cysteine 257. A glycan (N-linked (GlcNAc...) asparagine) is linked at asparagine 269. Cystine bridges form between cysteine 270-cysteine 282, cysteine 276-cysteine 289, cysteine 291-cysteine 300, cysteine 313-cysteine 325, cysteine 319-cysteine 332, cysteine 334-cysteine 343, cysteine 402-cysteine 414, cysteine 408-cysteine 421, and cysteine 423-cysteine 432. Asparagine 474 is a glycosylation site (N-linked (GlcNAc...) asparagine). EGF-like domains follow at residues 484 to 519, 575 to 605, 613 to 648, and 656 to 691; these read WGFN…AHCQ, SNTC…PSCQ, YGKR…PDCS, and WGLK…PNCL. Intrachain disulfides connect cysteine 488-cysteine 500, cysteine 494-cysteine 507, cysteine 509-cysteine 518, cysteine 578-cysteine 586, cysteine 580-cysteine 593, cysteine 595-cysteine 604, cysteine 617-cysteine 629, cysteine 622-cysteine 636, cysteine 638-cysteine 647, cysteine 660-cysteine 672, cysteine 666-cysteine 679, and cysteine 681-cysteine 690. Residues 755 to 775 form a helical membrane-spanning segment; it reads GAVIGIAVLGTLVVALIALFI. At 776–1034 the chain is on the cytoplasmic side; sequence GYRQWQKGKE…PSPPSRRQDR (259 aa). Residues 823–883 are disordered; sequence TLSQCSPNPP…PHERGASHLD (61 aa). The span at 851–883 shows a compositional bias: basic and acidic residues; the sequence is RPSRAHGRENHVTLPADWKHRREPHERGASHLD. At tyrosine 923 the chain carries Phosphotyrosine. A disordered region spans residues 925–1034; it reads TIRDLPSLPG…PSPPSRRQDR (110 aa). The residue at position 951 (serine 951) is a Phosphoserine. Over residues 972-991 the composition is skewed to polar residues; it reads DSGTYEQPSPLSHNEESLGS. A Phosphoserine modification is found at serine 1026.

The protein belongs to the MEGF family. In terms of assembly, interacts with SHC2 upon its aggregation-induced tyrosine phosphorylation. Interacts (via extracellular domain) with SVEP1. Phosphorylated in the intracellular domain on tyrosine residues. Phosphorylated on tyrosine residues by SRC. Tyrosine phosphorylation is detected upon platelet aggregation stimulated by collagen, TRAP and thrombin and platelet-platelet contacts but not after platelet activation. Tyrosine phosphorylation enhanced its association with SHC1 and SHC2. Phosphorylated in the intracellular domain on tyrosine residues. Phosphorylated when in the presence of SVEP1. As to expression, expressed in thymocytes, bone marrow stromal and osteogenic cells (at protein level). Strongly expressed in kidney and heart. Moderately expressed in lung, spleen, thymus, liver, brain, testis, skin and stomach. Expressed in hematopoietic stem progenitor cells.

The protein resides in the cell membrane. It is found in the cell projection. The protein localises to the lamellipodium. Its function is as follows. Required for SVEP1-mediated platelet activation, via its interaction with SVEP1 and subsequent activation of AKT/mTOR signaling. May be involved in the early stages of hematopoiesis. This chain is Platelet endothelial aggregation receptor 1 (Pear1), found in Mus musculus (Mouse).